We begin with the raw amino-acid sequence, 323 residues long: Galectin-4 (323 aa).

2 consecutive Galectin domains span residues Tyr-19–Ile-150 and Tyr-194–Ile-323. Trp-256 to Lys-262 contacts a beta-D-galactoside.

As to quaternary structure, monomer.

Its function is as follows. Galectin that binds lactose and a related range of sugars. May be involved in the assembly of adherens junctions. The sequence is that of Galectin-4 (LGALS4) from Sus scrofa (Pig).